The following is a 359-amino-acid chain: 4-hydroxy-3-methylbut-2-en-1-yl diphosphate synthase (flavodoxin) (359 aa).

[4Fe-4S] cluster contacts are provided by Cys264, Cys267, Cys299, and Glu306.

Belongs to the IspG family. [4Fe-4S] cluster serves as cofactor.

The enzyme catalyses (2E)-4-hydroxy-3-methylbut-2-enyl diphosphate + oxidized [flavodoxin] + H2O + 2 H(+) = 2-C-methyl-D-erythritol 2,4-cyclic diphosphate + reduced [flavodoxin]. The protein operates within isoprenoid biosynthesis; isopentenyl diphosphate biosynthesis via DXP pathway; isopentenyl diphosphate from 1-deoxy-D-xylulose 5-phosphate: step 5/6. Its function is as follows. Converts 2C-methyl-D-erythritol 2,4-cyclodiphosphate (ME-2,4cPP) into 1-hydroxy-2-methyl-2-(E)-butenyl 4-diphosphate. The protein is 4-hydroxy-3-methylbut-2-en-1-yl diphosphate synthase (flavodoxin) of Mycoplasmoides gallisepticum (strain R(low / passage 15 / clone 2)) (Mycoplasma gallisepticum).